Reading from the N-terminus, the 470-residue chain is Aspartyl aminopeptidase (470 aa).

Zn(2+) is bound at residue His92. His166 lines the substrate pocket. A Zn(2+)-binding site is contributed by Asp263. Glu299 is a binding site for substrate. Residues Glu300 and Asp343 each contribute to the Zn(2+) site. The substrate site is built by Asp343, His346, Lys371, and Tyr378. His437 contacts Zn(2+).

This sequence belongs to the peptidase M18 family. In terms of assembly, tetrahedron-shaped homododecamer built from six homodimers. Zn(2+) serves as cofactor. Expressed in various cell types and tissues including the pharynx, neurons, body wall muscle, intestine and vulva.

It is found in the cytoplasm. The protein localises to the cytosol. It catalyses the reaction Release of an N-terminal aspartate or glutamate from a peptide, with a preference for aspartate.. In terms of biological role, aminopeptidase with specificity towards an acidic amino acid at the N-terminus. Plays a role in membrane trafficking and is specifically involved in the recycling and degradation of endocytic cargo. This is Aspartyl aminopeptidase from Caenorhabditis elegans.